Here is a 259-residue protein sequence, read N- to C-terminus: Hydroxyacylglutathione hydrolase (259 aa).

Histidine 56, histidine 58, aspartate 60, histidine 61, histidine 112, aspartate 133, and histidine 171 together coordinate Zn(2+). A compositionally biased stretch (basic and acidic residues) spans 224 to 238; it reads RTRETSVKEKADERS. Positions 224–245 are disordered; sequence RTRETSVKEKADERSSGQNTSQ.

The protein belongs to the metallo-beta-lactamase superfamily. Glyoxalase II family. Monomer. It depends on Zn(2+) as a cofactor.

It carries out the reaction an S-(2-hydroxyacyl)glutathione + H2O = a 2-hydroxy carboxylate + glutathione + H(+). The protein operates within secondary metabolite metabolism; methylglyoxal degradation; (R)-lactate from methylglyoxal: step 2/2. Its function is as follows. Thiolesterase that catalyzes the hydrolysis of S-D-lactoyl-glutathione to form glutathione and D-lactic acid. The polypeptide is Hydroxyacylglutathione hydrolase (Pseudomonas savastanoi pv. phaseolicola (strain 1448A / Race 6) (Pseudomonas syringae pv. phaseolicola (strain 1448A / Race 6))).